A 147-amino-acid polypeptide reads, in one-letter code: Large ribosomal subunit protein uL16 (147 aa).

This sequence belongs to the universal ribosomal protein uL16 family. Part of the 50S ribosomal subunit.

Its function is as follows. Binds 23S rRNA and is also seen to make contacts with the A and possibly P site tRNAs. The sequence is that of Large ribosomal subunit protein uL16 from Lactobacillus delbrueckii subsp. bulgaricus (strain ATCC 11842 / DSM 20081 / BCRC 10696 / JCM 1002 / NBRC 13953 / NCIMB 11778 / NCTC 12712 / WDCM 00102 / Lb 14).